Consider the following 710-residue polypeptide: Probable GTP diphosphokinase RSH2, chloroplastic (710 aa).

A chloroplast-targeting transit peptide spans 1 to 63; the sequence is MVVATTIALY…SSLFSSASVK (63 aa). The HD domain maps to 233–337; it reads YLQHCVETAM…IKLADRLHNM (105 aa).

The protein belongs to the RelA/SpoT family.

It is found in the plastid. The protein localises to the chloroplast. The enzyme catalyses GTP + ATP = guanosine 3'-diphosphate 5'-triphosphate + AMP. In terms of biological role, probable ppGpp (guanosine 3'-diphosphate 5'-diphosphate) synthetase that may be involved in a rapid plant ppGpp-mediated response to pathogens and other stresses. The chain is Probable GTP diphosphokinase RSH2, chloroplastic (RSH2) from Arabidopsis thaliana (Mouse-ear cress).